We begin with the raw amino-acid sequence, 184 residues long: ATP synthase subunit b, chloroplastic (184 aa).

The helical transmembrane segment at Leu27 to Leu49 threads the bilayer.

Belongs to the ATPase B chain family. As to quaternary structure, F-type ATPases have 2 components, F(1) - the catalytic core - and F(0) - the membrane proton channel. F(1) has five subunits: alpha(3), beta(3), gamma(1), delta(1), epsilon(1). F(0) has four main subunits: a(1), b(1), b'(1) and c(10-14). The alpha and beta chains form an alternating ring which encloses part of the gamma chain. F(1) is attached to F(0) by a central stalk formed by the gamma and epsilon chains, while a peripheral stalk is formed by the delta, b and b' chains.

The protein resides in the plastid. The protein localises to the chloroplast thylakoid membrane. Its function is as follows. F(1)F(0) ATP synthase produces ATP from ADP in the presence of a proton or sodium gradient. F-type ATPases consist of two structural domains, F(1) containing the extramembraneous catalytic core and F(0) containing the membrane proton channel, linked together by a central stalk and a peripheral stalk. During catalysis, ATP synthesis in the catalytic domain of F(1) is coupled via a rotary mechanism of the central stalk subunits to proton translocation. Component of the F(0) channel, it forms part of the peripheral stalk, linking F(1) to F(0). The chain is ATP synthase subunit b, chloroplastic from Arabis hirsuta (Hairy rock-cress).